We begin with the raw amino-acid sequence, 498 residues long: Cytochrome P450 monooxygenase aflU (498 aa).

The helical transmembrane segment at 5-27 threads the bilayer; the sequence is TVYTSLIGLLVALTVRSIYRVYF. 2 N-linked (GlcNAc...) asparagine glycosylation sites follow: N259 and N354. C438 contributes to the heme binding site.

It belongs to the cytochrome P450 family. Requires heme as cofactor.

It localises to the membrane. It participates in mycotoxin biosynthesis; aflatoxin biosynthesis. In terms of biological role, cytochrome P450 monooxygenase; part of the gene cluster that mediates the biosynthesis of aflatoxins, a group of polyketide-derived furanocoumarins, and part of the most toxic and carcinogenic compounds among the known mycotoxins. The four major aflatoxins produced by A.parasiticus are aflatoxin B1 (AFB1), aflatoxin B2 (AFB2), aflatoxin G1 (AFG1) and aflatoxin G2 (AFG2). Within the aflatoxin pathway, the cytochrome P450 monooxygenase aflU is involved in the last steps in which OMST is converted to aflatoxins B1 and G1, and DHOMST to aflatoxins B2 and G2. The biosynthesis of aflatoxins begins with the norsolorinic acid synthase aflC that combines a hexanoyl starter unit produced by the fatty acid synthase aflA/aflB and 7 malonyl-CoA extender units to synthesize the precursor NOR. The second step is the conversion of NOR to averantin and requires the norsolorinic acid ketoreductase aflD, which catalyzes the dehydration of norsolorinic acid to form (1'S)-averantin. The norsolorinic acid reductases aflE and aflF may also play a role in the conversion of NOR to AVN. The cytochrome P450 monooxygenase aflG then catalyzes the hydroxylation of AVN to 5'hydroxyaverantin (HAVN). The next step is performed by the 5'-hydroxyaverantin dehydrogenase aflH that transforms HAVN to 5'-oxoaverantin (OAVN) which is further converted to averufin (AVF) by aflK that plays a dual role in the pathway, as a 5'-oxoaverantin cyclase that mediates conversion of 5'-oxoaverantin, as well as a versicolorin B synthase in a later step in the pathway. The averufin oxidase aflI catalyzes the conversion of AVF to versiconal hemiacetal acetate (VHA). VHA is then the substrate for the versiconal hemiacetal acetate esterase aflJ to yield versiconal (VAL). Versicolorin B synthase aflK then converts VAL to versicolorin B (VERB) by closing the bisfuran ring of aflatoxin which is required for DNA-binding, thus giving to aflatoxin its activity as a mutagen. Then, the activity of the versicolorin B desaturase aflL leads to versicolorin A (VERA). A branch point starts from VERB since it can also be converted to dihydrodemethylsterigmatocystin (DMDHST), probably also by aflL, VERA being a precursor for aflatoxins B1 and G1, and DMDHST for aflatoxins B2 and G2. Next, the versicolorin reductase aflM and the cytochrome P450 monooxygenase aflN are involved in conversion of VERA to demethylsterigmatocystin (DMST). AflX and aflY seem also involved in this step, through probable aflX-mediated epoxide ring-opening step following versicolorin A oxidation and aflY-mediated Baeyer-Villiger oxidation required for the formation of the xanthone ring. The methyltransferase aflO then leads to the modification of DMST to sterigmatocystin (ST), and of DMDHST to dihydrosterigmatocystin (DHST). Both ST and DHST are then substrates of the O-methyltransferase aflP to yield O-methylsterigmatocystin (OMST) and dihydro-O-methylsterigmatocystin (DHOMST), respectively. Finally OMST is converted to aflatoxins B1 and G1, and DHOMST to aflatoxins B2 and G2, via the action of several enzymes including O-methylsterigmatocystin oxidoreductase aflQ, the cytochrome P450 monooxygenase aflU, but also the NADH-dependent flavin oxidoreductase nadA which is specifically required for the synthesis of AFG1. The polypeptide is Cytochrome P450 monooxygenase aflU (Aspergillus parasiticus (strain ATCC 56775 / NRRL 5862 / SRRC 143 / SU-1)).